Reading from the N-terminus, the 169-residue chain is uncharacterized protein (169 aa).

Its subcellular location is the mitochondrion. This is an uncharacterized protein from Paramecium tetraurelia.